A 226-amino-acid chain; its full sequence is Fibronectin type III domain-containing protein 9 (226 aa).

A Fibronectin type-III domain is found at 1-101 (MNIEVGNVSH…FHTLDKSPLA (101 aa)). The chain crosses the membrane as a helical span at residues 113 to 133 (LWVLMAILLACFTAVLAFICL).

Its subcellular location is the membrane. The sequence is that of Fibronectin type III domain-containing protein 9 (Fndc9) from Mus musculus (Mouse).